The primary structure comprises 425 residues: UDP-N-acetylglucosamine 1-carboxyvinyltransferase (425 aa).

Phosphoenolpyruvate is bound at residue 22 to 23 (KN). R98 lines the UDP-N-acetyl-alpha-D-glucosamine pocket. Catalysis depends on C122, which acts as the Proton donor. C122 is modified (2-(S-cysteinyl)pyruvic acid O-phosphothioketal). Residues 127–131 (RPVDQ), D313, and I335 each bind UDP-N-acetyl-alpha-D-glucosamine.

It belongs to the EPSP synthase family. MurA subfamily.

The protein resides in the cytoplasm. It carries out the reaction phosphoenolpyruvate + UDP-N-acetyl-alpha-D-glucosamine = UDP-N-acetyl-3-O-(1-carboxyvinyl)-alpha-D-glucosamine + phosphate. It functions in the pathway cell wall biogenesis; peptidoglycan biosynthesis. In terms of biological role, cell wall formation. Adds enolpyruvyl to UDP-N-acetylglucosamine. The polypeptide is UDP-N-acetylglucosamine 1-carboxyvinyltransferase (Xylella fastidiosa (strain M23)).